The primary structure comprises 465 residues: MAGGKQFTFSYENEVCKQDYFIKSPPSQLFSSVTSWKKRFFILSKAGEKSFSLSYYKDHHHRGSIEIDQNSSVEVGISSQEKMQSVQKMFKCHPDEVMSIRTTNREYFLIGHDREKIKDWVSFMSSFRQDIKATQQNTEEELSLGNKRTLFYSSPLLGPSSTSEAVGSSSPRNGLQDKHLMEQSSPGFRQTHLQDLSEATQDVKEENHYLTPRSVLLELDNIIASSDSGESIETDGPDQVSGRIECHYEPMESYFFKETSHESVDSSKEEPQTLPETQDGDLHLQEQGSGIDWCLSPADVEAQTTNDQKGNIPDESQVEKLNVFLSPPDVINYLALTEATGRICVSQWEGPPRLGCIFCHGDHLLAVNDLKPQSLEEVSLFLTRSIQKEDSFRILSYQVAFGEGTELRDRAPGFRTSDRHDVAKRACMESDWCRDSKTAPSTNLCLSFLFCKIMTNDGAGCWIIK.

Residues 14 to 129 (EVCKQDYFIK…WVSFMSSFRQ (116 aa)) form the PH domain. Over residues 159 to 173 (PSSTSEAVGSSSPRN) the composition is skewed to polar residues. 2 disordered regions span residues 159 to 179 (PSST…QDKH) and 258 to 283 (ETSH…GDLH). Residues 258-271 (ETSHESVDSSKEEP) are compositionally biased toward basic and acidic residues.

The sequence is that of Pleckstrin homology domain-containing family S member 1 from Homo sapiens (Human).